The primary structure comprises 466 residues: Lipase 2 (466 aa).

The first 16 residues, 1–16, serve as a signal peptide directing secretion; the sequence is MKGLVFLLGLLPTIYA. The cysteines at positions 112 and 285 are disulfide-linked. Catalysis depends on serine 196, which acts as the Charge relay system. 3 N-linked (GlcNAc...) asparagine glycosylation sites follow: asparagine 231, asparagine 319, and asparagine 331. Catalysis depends on charge relay system residues aspartate 348 and histidine 381. A disulfide bridge links cysteine 364 with cysteine 409. Asparagine 422 and asparagine 451 each carry an N-linked (GlcNAc...) asparagine glycan.

The protein belongs to the AB hydrolase superfamily. Lipase family. Class Lip subfamily.

Its subcellular location is the secreted. It catalyses the reaction a triacylglycerol + H2O = a diacylglycerol + a fatty acid + H(+). In terms of biological role, secreted lipase that is able to hydrolyze both the neutral triacylglycerols and the monopalmitate ester Tween 40, allowing the use of hydrolyzed products as carbon sources. Has broad lipolytic activity, which may be important for colonization and subsequent infection, therefore contributing to the persistence and virulence in human tissue. My be important for alimentary tract colonization, but not oral infection. Facilitates invasive disease via lipid-based suppression of the IL-17 response. Inhibits IL-17 production indirectly by suppressing IL-23 production by tissue-resident dendritic cells. The sequence is that of Lipase 2 from Candida albicans (strain SC5314 / ATCC MYA-2876) (Yeast).